The following is a 275-amino-acid chain: 2,3,4,5-tetrahydropyridine-2,6-dicarboxylate N-succinyltransferase (275 aa).

Belongs to the transferase hexapeptide repeat family.

The protein localises to the cytoplasm. It catalyses the reaction (S)-2,3,4,5-tetrahydrodipicolinate + succinyl-CoA + H2O = (S)-2-succinylamino-6-oxoheptanedioate + CoA. It participates in amino-acid biosynthesis; L-lysine biosynthesis via DAP pathway; LL-2,6-diaminopimelate from (S)-tetrahydrodipicolinate (succinylase route): step 1/3. This chain is 2,3,4,5-tetrahydropyridine-2,6-dicarboxylate N-succinyltransferase, found in Cupriavidus taiwanensis (strain DSM 17343 / BCRC 17206 / CCUG 44338 / CIP 107171 / LMG 19424 / R1) (Ralstonia taiwanensis (strain LMG 19424)).